Here is a 114-residue protein sequence, read N- to C-terminus: uncharacterized protein (114 aa).

3 consecutive transmembrane segments (helical) span residues 38–60, 64–86, and 91–113; these read PLWF…TAGI, YAAI…AHMF, and SVIM…MGSY.

It is found in the cell membrane. This is an uncharacterized protein from Bacillus subtilis (strain 168).